The primary structure comprises 222 residues: Riboflavin kinase (222 aa).

Residues 1 to 92 form an H-T-H motif-like region; that stretch reads MVLAEDLECL…CRLFAHEGGH (92 aa). Residues 93–222 are riboflavin kinase; that stretch reads YTLPGIVISG…DRVNVEVAYD (130 aa). 102–107 contributes to the CDP binding site; sequence GLGEGR. Thr131 and Asn133 together coordinate Mg(2+). Residues Ser188 and Glu196 each contribute to the FMN site. 201–204 provides a ligand contact to CDP; it reads VGLR.

Belongs to the archaeal riboflavin kinase family. The cofactor is Mg(2+).

The catalysed reaction is riboflavin + CTP = CDP + FMN + H(+). It functions in the pathway cofactor biosynthesis; FMN biosynthesis; FMN from riboflavin (CTP route): step 1/1. In terms of biological role, catalyzes the CTP-dependent phosphorylation of riboflavin (vitamin B2) to form flavin mononucleotide (FMN). The protein is Riboflavin kinase (ribK) of Methanoregula boonei (strain DSM 21154 / JCM 14090 / 6A8).